Consider the following 701-residue polypeptide: Serologically defined colon cancer antigen 8 homolog (701 aa).

The segment covering 1-13 (MKPSLESDEEEEL) has biased composition (acidic residues). Disordered stretches follow at residues 1–67 (MKPS…VQQS) and 84–114 (ANIQ…GVHN). Positions 45–67 (SEPNQQELLSSVQQNPCSPVQQS) are enriched in polar residues. Coiled-coil stretches lie at residues 119–173 (INNQ…LKEY), 203–258 (HKWR…AVAA), and 323–695 (QQVK…AGKR). The segment at 364 to 387 (LASEQDKISQAREAARSESKKERE) is disordered.

It localises to the cytoplasm. Its subcellular location is the cytoskeleton. It is found in the microtubule organizing center. The protein resides in the centrosome. The protein localises to the centriole. It localises to the cilium basal body. Its subcellular location is the cell junction. Plays a role in the establishment of cell polarity and epithelial lumen formation. Also plays an essential role in ciliogenesis and subsequent Hedgehog signaling pathway that requires the presence of intact primary cilia for pathway activation. Mechanistically, interacts with and mediates RABEP2 centrosomal localization which is critical for ciliogenesis. The polypeptide is Serologically defined colon cancer antigen 8 homolog (Sdccag8) (Danio rerio (Zebrafish)).